The sequence spans 299 residues: Probable lipid kinase YegS (299 aa).

The 132-residue stretch at Ala-2–Thr-133 folds into the DAGKc domain. Residues Thr-40, Gly-66–Glu-72, and Thr-95 contribute to the ATP site. 3 residues coordinate Mg(2+): Leu-215, Asp-218, and Leu-220. Glu-271 functions as the Proton acceptor in the catalytic mechanism.

This sequence belongs to the diacylglycerol/lipid kinase family. YegS lipid kinase subfamily. Mg(2+) serves as cofactor. The cofactor is Ca(2+).

The protein resides in the cytoplasm. Its function is as follows. Probably phosphorylates lipids; the in vivo substrate is unknown. The protein is Probable lipid kinase YegS of Shigella dysenteriae serotype 1 (strain Sd197).